The sequence spans 834 residues: Translation factor GUF1 homolog, mitochondrial (834 aa).

The transit peptide at 1–66 (MKLCGVRGSG…RPLLAEPRRY (66 aa)) directs the protein to the mitochondrion. The region spanning 129–314 (ACIRNVSVVA…QIIDKVPPPR (186 aa)) is the tr-type G domain. Residues 138–145 (AHVDHGKT), 205–209 (DTPGH), and 259–262 (TKMD) each bind GTP. Residues 475–507 (ATGPPETASRTKPATAAETASSDDASGSSGSSV) form a disordered region. Positions 488 to 507 (ATAAETASSDDASGSSGSSV) are enriched in low complexity.

Belongs to the TRAFAC class translation factor GTPase superfamily. Classic translation factor GTPase family. LepA subfamily.

It localises to the mitochondrion inner membrane. The catalysed reaction is GTP + H2O = GDP + phosphate + H(+). Promotes mitochondrial protein synthesis. May act as a fidelity factor of the translation reaction, by catalyzing a one-codon backward translocation of tRNAs on improperly translocated ribosomes. Binds to mitochondrial ribosomes in a GTP-dependent manner. This Leishmania major protein is Translation factor GUF1 homolog, mitochondrial.